We begin with the raw amino-acid sequence, 175 residues long: Lactobacillus up-regulated protein (175 aa).

Positions 1-18 (MRSIFLAVLGLMATSSLA) are cleaved as a signal peptide. Asn59 is a glycosylation site (N-linked (GlcNAc...) asparagine).

The chain is Lactobacillus up-regulated protein (lbuA) from Emericella nidulans (strain FGSC A4 / ATCC 38163 / CBS 112.46 / NRRL 194 / M139) (Aspergillus nidulans).